A 263-amino-acid polypeptide reads, in one-letter code: Hydroxyacylglutathione hydrolase (263 aa).

7 residues coordinate Zn(2+): H55, H57, D59, H60, H117, D134, and H172.

Belongs to the metallo-beta-lactamase superfamily. Glyoxalase II family. As to quaternary structure, monomer. Zn(2+) is required as a cofactor.

The catalysed reaction is an S-(2-hydroxyacyl)glutathione + H2O = a 2-hydroxy carboxylate + glutathione + H(+). It functions in the pathway secondary metabolite metabolism; methylglyoxal degradation; (R)-lactate from methylglyoxal: step 2/2. In terms of biological role, thiolesterase that catalyzes the hydrolysis of S-D-lactoyl-glutathione to form glutathione and D-lactic acid. The protein is Hydroxyacylglutathione hydrolase of Shewanella baltica (strain OS195).